The following is a 1328-amino-acid chain: Protein turtle homolog B (1328 aa).

The signal sequence occupies residues 1–20; the sequence is MIWYVATLIASVISTRGLVA. Topologically, residues 21–722 are extracellular; the sequence is QVAHGLREEP…DLTDDGLARP (702 aa). 5 consecutive Ig-like domains span residues 30-115, 139-226, 228-320, 324-415, and 420-504; these read PEFV…ECKV, PTFT…LLVQ, PPFI…AYLT, PARV…ARLV, and PYFT…THLT. Intrachain disulfides connect C45–C113 and C161–C208. N-linked (GlcNAc...) asparagine glycosylation is found at N241 and N258. 3 disulfide bridges follow: C250–C303, C346–C397, and C442–C488. Fibronectin type-III domains are found at residues 512 to 604 and 614 to 708; these read APGS…TLAF and LVTP…STDI. An N-linked (GlcNAc...) asparagine glycan is attached at N624. A helical transmembrane segment spans residues 723 to 743; it reads VLAGIVATICFLAAAILFSTL. The Cytoplasmic segment spans residues 744–1328; sequence AACFVNKQRK…EPPTTLPTSG (585 aa). Disordered stretches follow at residues 758 to 817, 914 to 1040, and 1107 to 1328; these read RKKD…EKEL, PMSS…PEPW, and SPGR…PTSG. Residues S775, S783, and S794 each carry the phosphoserine modification. A compositionally biased stretch (low complexity) spans 990–1001; that stretch reads SPLSSVMSSPPL. Composition is skewed to polar residues over residues 1018 to 1033, 1129 to 1141, and 1199 to 1214; these read ENASNSTLPLTQTPTG, LVSQGQLRHTSQG, and SRLSPLTQSPLSSRTG. R1136 bears the Omega-N-methylarginine mark. A phosphoserine mark is found at S1207 and S1215. The segment covering 1246 to 1273 has biased composition (low complexity); sequence SFSRKSTPSSTGSPSQSSRSGSPSYRPT. 2 stretches are compositionally biased toward pro residues: residues 1284–1295 and 1318–1328; these read PSPPPGPAPPAP and PEPPTTLPTSG.

Belongs to the immunoglobulin superfamily. Turtle family. Found in a complex with MAGI2 and NLGN2, where it interacts with MAGI2 (via PDZ 5 and PDZ 6 domains). In terms of processing, N-glycosylated and sialylated. Not significantly O-glycosylated. Detected primarily in brain, including cortex, hippocampus, cerebellum and striatum. Largely restricted to inhibitory GABAergic interneurons (at protein level).

The protein localises to the postsynaptic cell membrane. It is found in the postsynaptic density. Transmembrane protein which is abundantly expressed in interneurons, where it may regulate inhibitory synapse development. May mediate homophilic cell adhesion. The polypeptide is Protein turtle homolog B (Rattus norvegicus (Rat)).